Here is a 430-residue protein sequence, read N- to C-terminus: Adenylosuccinate synthetase (430 aa).

GTP is bound by residues 13–19 and 41–43; these read GDEGKGK and GHT. Asp14 serves as the catalytic Proton acceptor. Asp14 and Gly41 together coordinate Mg(2+). IMP contacts are provided by residues 14–17, 39–42, Thr130, Arg144, Gln225, Thr240, and Arg304; these read DEGK and NAGH. His42 acts as the Proton donor in catalysis. 300-306 lines the substrate pocket; the sequence is ASTGRPR. Residues Arg306, 332–334, and 414–416 contribute to the GTP site; these read KLD and STG.

It belongs to the adenylosuccinate synthetase family. In terms of assembly, homodimer. Mg(2+) is required as a cofactor.

The protein resides in the cytoplasm. The enzyme catalyses IMP + L-aspartate + GTP = N(6)-(1,2-dicarboxyethyl)-AMP + GDP + phosphate + 2 H(+). The protein operates within purine metabolism; AMP biosynthesis via de novo pathway; AMP from IMP: step 1/2. In terms of biological role, plays an important role in the de novo pathway of purine nucleotide biosynthesis. Catalyzes the first committed step in the biosynthesis of AMP from IMP. In Xanthomonas oryzae pv. oryzae (strain MAFF 311018), this protein is Adenylosuccinate synthetase.